Here is a 285-residue protein sequence, read N- to C-terminus: Probable endonuclease 4 (285 aa).

Residues H69, H109, E145, D179, H182, H216, D229, H231, and E261 each coordinate Zn(2+).

It belongs to the AP endonuclease 2 family. Zn(2+) serves as cofactor.

The catalysed reaction is Endonucleolytic cleavage to 5'-phosphooligonucleotide end-products.. Functionally, endonuclease IV plays a role in DNA repair. It cleaves phosphodiester bonds at apurinic or apyrimidinic (AP) sites, generating a 3'-hydroxyl group and a 5'-terminal sugar phosphate. In Salmonella paratyphi A (strain AKU_12601), this protein is Probable endonuclease 4.